The primary structure comprises 210 residues: Ribosomal RNA large subunit methyltransferase E (210 aa).

Residues Gly-60, Trp-62, Asp-80, Asp-96, and Asp-122 each contribute to the S-adenosyl-L-methionine site. Residue Lys-162 is the Proton acceptor of the active site.

The protein belongs to the class I-like SAM-binding methyltransferase superfamily. RNA methyltransferase RlmE family.

It localises to the cytoplasm. It catalyses the reaction uridine(2552) in 23S rRNA + S-adenosyl-L-methionine = 2'-O-methyluridine(2552) in 23S rRNA + S-adenosyl-L-homocysteine + H(+). Specifically methylates the uridine in position 2552 of 23S rRNA at the 2'-O position of the ribose in the fully assembled 50S ribosomal subunit. This chain is Ribosomal RNA large subunit methyltransferase E, found in Dichelobacter nodosus (strain VCS1703A).